The sequence spans 340 residues: UDP-3-O-acylglucosamine N-acyltransferase (340 aa).

The Proton acceptor role is filled by histidine 238.

It belongs to the transferase hexapeptide repeat family. LpxD subfamily. Homotrimer.

The catalysed reaction is a UDP-3-O-[(3R)-3-hydroxyacyl]-alpha-D-glucosamine + a (3R)-hydroxyacyl-[ACP] = a UDP-2-N,3-O-bis[(3R)-3-hydroxyacyl]-alpha-D-glucosamine + holo-[ACP] + H(+). Its pathway is bacterial outer membrane biogenesis; LPS lipid A biosynthesis. Its function is as follows. Catalyzes the N-acylation of UDP-3-O-acylglucosamine using 3-hydroxyacyl-ACP as the acyl donor. Is involved in the biosynthesis of lipid A, a phosphorylated glycolipid that anchors the lipopolysaccharide to the outer membrane of the cell. In Shewanella denitrificans (strain OS217 / ATCC BAA-1090 / DSM 15013), this protein is UDP-3-O-acylglucosamine N-acyltransferase.